The following is a 36-amino-acid chain: Photosystem I reaction center subunit VIII (36 aa).

The chain crosses the membrane as a helical span at residues 6–28 (FPSVLVPLVGLVFPAMAMASLSL).

It belongs to the PsaI family.

Its subcellular location is the plastid. The protein localises to the chloroplast thylakoid membrane. Its function is as follows. May help in the organization of the PsaL subunit. The chain is Photosystem I reaction center subunit VIII from Panax ginseng (Korean ginseng).